Consider the following 320-residue polypeptide: GTPase Era (320 aa).

In terms of domain architecture, Era-type G spans 25–193 (HCGFIAIVGR…RKHVRDHLPK (169 aa)). The interval 33–40 (GRPNVGKS) is G1. Position 33–40 (33–40 (GRPNVGKS)) interacts with GTP. Positions 59–63 (QTTRH) are G2. Residues 80 to 83 (DTPG) are G3. Residues 80–84 (DTPGL) and 142–145 (NKVD) each bind GTP. The tract at residues 142–145 (NKVD) is G4. Positions 172-174 (ISA) are G5. A KH type-2 domain is found at 216-302 (VREKLMRFTG…YLETWVKVKS (87 aa)).

Belongs to the TRAFAC class TrmE-Era-EngA-EngB-Septin-like GTPase superfamily. Era GTPase family. As to quaternary structure, monomer.

It is found in the cytoplasm. The protein resides in the cell inner membrane. Functionally, an essential GTPase that binds both GDP and GTP, with rapid nucleotide exchange. Plays a role in 16S rRNA processing and 30S ribosomal subunit biogenesis and possibly also in cell cycle regulation and energy metabolism. This chain is GTPase Era, found in Vibrio vulnificus (strain CMCP6).